Consider the following 26-residue polypeptide: Superoxide dismutase [Cu-Zn] (26 aa).

Cys7 is lipidated: S-palmitoyl cysteine.

It belongs to the Cu-Zn superoxide dismutase family. As to quaternary structure, homotrimer. Cu cation is required as a cofactor. Zn(2+) serves as cofactor.

It is found in the cytoplasm. Its subcellular location is the nucleus. It carries out the reaction 2 superoxide + 2 H(+) = H2O2 + O2. Functionally, destroys radicals which are normally produced within the cells and which are toxic to biological systems. This Paralichthys olivaceus (Bastard halibut) protein is Superoxide dismutase [Cu-Zn] (sod1).